The sequence spans 1626 residues: DNA topoisomerase 2-beta (1626 aa).

An N-acetylalanine modification is found at Ala-2. Lys-3 is modified (N6-acetyllysine). Residues Gln-28, Asn-29, Lys-33, and Lys-34 each participate in a glycyl lysine isopeptide (Lys-Gly) (interchain with G-Cter in SUMO2) cross-link. ATP is bound by residues Asn-112, Asn-141, and 169-171 (SSN). Glycyl lysine isopeptide (Lys-Gly) (interchain with G-Cter in SUMO2) cross-links involve residues Lys-177 and Lys-178. 182–189 (GRNGYGAK) contacts ATP. Glycyl lysine isopeptide (Lys-Gly) (interchain with G-Cter in SUMO2) cross-links involve residues Lys-228 and Lys-299. An interaction with DNA region spans residues 363-365 (KKK). Residues Lys-367 and Lys-373 each participate in a glycyl lysine isopeptide (Lys-Gly) (interchain with G-Cter in SUMO2) cross-link. Residue 397–399 (QTK) participates in ATP binding. Glycyl lysine isopeptide (Lys-Gly) (interchain with G-Cter in SUMO2) cross-links involve residues Lys-437, Lys-439, and Lys-446. The Toprim domain occupies 476-593 (CTLILTEGDS…SLLKHGFLEE (118 aa)). Residues Glu-482, Asp-562, and Asp-564 each coordinate Mg(2+). Residues Lys-600, Lys-605, Lys-635, Lys-643, Lys-646, Lys-676, and Lys-712 each participate in a glycyl lysine isopeptide (Lys-Gly) (interchain with G-Cter in SUMO2) cross-link. One can recognise a Topo IIA-type catalytic domain in the interval 736-1189 (IPSLVDGFKP…SPSDLWKEDL (454 aa)). Residue Tyr-826 is the O-(5'-phospho-DNA)-tyrosine intermediate of the active site. The segment at 1011–1020 (KLQTTLTCNS) is interaction with DNA. The short motif at 1034–1044 (ETVQDILKEFF) is the Nuclear export signal element. Residue Lys-1092 forms a Glycyl lysine isopeptide (Lys-Gly) (interchain with G-Cter in SUMO2) linkage. Residues 1110-1140 (AWKEAQEKAAEEDETQNQHDDSSSDSGTPSG) form a disordered region. Glycyl lysine isopeptide (Lys-Gly) (interchain with G-Cter in SUMO2) cross-links involve residues Lys-1214, Lys-1217, Lys-1226, and Lys-1227. Ser-1236 carries the phosphoserine modification. Glycyl lysine isopeptide (Lys-Gly) (interchain with G-Cter in SUMO2) cross-links involve residues Lys-1250, Lys-1262, and Lys-1271. A disordered region spans residues 1274–1604 (FDEEFSGAPV…PSLPRTGRAR (331 aa)). At Thr-1292 the chain carries Phosphothreonine. Glycyl lysine isopeptide (Lys-Gly) (interchain with G-Cter in SUMO2) cross-links involve residues Lys-1323 and Lys-1327. Basic and acidic residues-rich tracts occupy residues 1334–1344 (PWSDDESKSES) and 1358–1370 (SLLR…RPKY). A phosphoserine mark is found at Ser-1336, Ser-1340, Ser-1342, Ser-1344, and Ser-1358. Phosphotyrosine is present on Tyr-1370. Residues 1374–1392 (FSEEEDDDADDDDDDNNDL) are compositionally biased toward acidic residues. Ser-1375 is modified (phosphoserine). Lys-1398 participates in a covalent cross-link: Glycyl lysine isopeptide (Lys-Gly) (interchain with G-Cter in SUMO2). The residue at position 1400 (Ser-1400) is a Phosphoserine. The residue at position 1403 (Thr-1403) is a Phosphothreonine. Ser-1413 is subject to Phosphoserine. Residue Tyr-1421 is modified to Phosphotyrosine. The residue at position 1424 (Ser-1424) is a Phosphoserine. Residues 1430–1442 (ATPEKSLHDKKSQ) are compositionally biased toward basic and acidic residues. Lys-1440 is covalently cross-linked (Glycyl lysine isopeptide (Lys-Gly) (interchain with G-Cter in SUMO2)). Phosphoserine occurs at positions 1441, 1452, and 1454. Residue Lys-1456 forms a Glycyl lysine isopeptide (Lys-Gly) (interchain with G-Cter in SUMO2) linkage. The segment covering 1456 to 1466 (KSEDDSAKFDS) has biased composition (basic and acidic residues). Phosphoserine is present on residues Ser-1461, Ser-1466, Ser-1473, and Ser-1476. Residue Lys-1490 forms a Glycyl lysine isopeptide (Lys-Gly) (interchain with G-Cter in SUMO2) linkage. Residues 1506 to 1512 (KPKRAPK) are interaction with PLSCR1. Phosphoserine is present on residues Ser-1522, Ser-1524, and Ser-1526. Residues 1539-1549 (GKGRGAKKRKA) show a composition bias toward basic residues. A phosphoserine mark is found at Ser-1550 and Ser-1552. A compositionally biased stretch (basic residues) spans 1563 to 1574 (KTSKTTSKKPKK). At Thr-1575 the chain carries Phosphothreonine. A phosphoserine mark is found at Ser-1576 and Ser-1581. Thr-1592 is modified (phosphothreonine). A Phosphoserine modification is found at Ser-1596. Tyr-1609 is modified (phosphotyrosine). The residue at position 1613 (Ser-1613) is a Phosphoserine.

Belongs to the type II topoisomerase family. As to quaternary structure, homodimer. Interacts with KIAA1210. Interacts with PLSCR1. The cofactor is Mg(2+). It depends on Mn(2+) as a cofactor. Ca(2+) is required as a cofactor. In terms of processing, (Microbial infection) Deubiquitinated by Epstein-Barr virus BPLF1; leading to stabilized SUMOylated TOP2A trapped in cleavage complexes, which halts the DNA damage response to TOP2A-induced double-strand DNA breaks. SUMOylated. Expressed in the tonsil, spleen, lymph node, thymus, skin, pancreas, testis, colon, kidney, liver, brain and lung. Also found in breast, colon and lung carcinomas, Hodgkin's disease, large-cell non-Hodgkin's lymphoma, lymphocytic lymphomas and seminomas.

It is found in the nucleus. The protein localises to the nucleolus. It localises to the nucleoplasm. It carries out the reaction ATP-dependent breakage, passage and rejoining of double-stranded DNA.. In terms of biological role, key decatenating enzyme that alters DNA topology by binding to two double-stranded DNA molecules, generating a double-stranded break in one of the strands, passing the intact strand through the broken strand, and religating the broken strand. Plays a role in B-cell differentiation. In Homo sapiens (Human), this protein is DNA topoisomerase 2-beta (TOP2B).